Consider the following 122-residue polypeptide: Holo-[acyl-carrier-protein] synthase (122 aa).

Residues aspartate 8 and glutamate 56 each contribute to the Mg(2+) site.

The protein belongs to the P-Pant transferase superfamily. AcpS family. The cofactor is Mg(2+).

The protein localises to the cytoplasm. It carries out the reaction apo-[ACP] + CoA = holo-[ACP] + adenosine 3',5'-bisphosphate + H(+). In terms of biological role, transfers the 4'-phosphopantetheine moiety from coenzyme A to a Ser of acyl-carrier-protein. This chain is Holo-[acyl-carrier-protein] synthase, found in Alkaliphilus oremlandii (strain OhILAs) (Clostridium oremlandii (strain OhILAs)).